A 524-amino-acid polypeptide reads, in one-letter code: Lysine--tRNA ligase (524 aa).

2 residues coordinate Mg(2+): glutamate 433 and glutamate 440.

This sequence belongs to the class-II aminoacyl-tRNA synthetase family. As to quaternary structure, homodimer. Mg(2+) serves as cofactor.

It is found in the cytoplasm. It catalyses the reaction tRNA(Lys) + L-lysine + ATP = L-lysyl-tRNA(Lys) + AMP + diphosphate. In Colwellia psychrerythraea (strain 34H / ATCC BAA-681) (Vibrio psychroerythus), this protein is Lysine--tRNA ligase.